A 263-amino-acid polypeptide reads, in one-letter code: Hydroxyethylthiazole kinase (263 aa).

Met45 is a binding site for substrate. Residues Arg121 and Ser167 each coordinate ATP. Residue Gly194 coordinates substrate.

This sequence belongs to the Thz kinase family. The cofactor is Mg(2+).

It catalyses the reaction 5-(2-hydroxyethyl)-4-methylthiazole + ATP = 4-methyl-5-(2-phosphooxyethyl)-thiazole + ADP + H(+). Its pathway is cofactor biosynthesis; thiamine diphosphate biosynthesis; 4-methyl-5-(2-phosphoethyl)-thiazole from 5-(2-hydroxyethyl)-4-methylthiazole: step 1/1. In terms of biological role, catalyzes the phosphorylation of the hydroxyl group of 4-methyl-5-beta-hydroxyethylthiazole (THZ). In Vibrio campbellii (strain ATCC BAA-1116), this protein is Hydroxyethylthiazole kinase.